Reading from the N-terminus, the 556-residue chain is CBS domain-containing protein CBSCBSPB3 (556 aa).

Polar residues-rich tracts occupy residues 1-20 and 30-44; these read MSTQATGPSSTSGRRSNSTV and PVQSENGSVNGNTSK. The disordered stretch occupies residues 1-63; that stretch reads MSTQATGPSS…SQAPSNGERT (63 aa). The residue at position 2 (S2) is an N-acetylserine. 4 consecutive CBS domains span residues 68 to 127, 134 to 189, 235 to 294, and 302 to 360; these read RLSK…RPDQ, MTRN…RMEK, ITDN…LSPE, and MTPN…ENSS. Positions 414 to 502 constitute a PB1 domain; that stretch reads GNSFSFKFED…KVLRLHLDFT (89 aa). A helical membrane pass occupies residues 527-549; that stretch reads WVSWRGGVVVTGAVVLTSIAIVV.

It localises to the membrane. The chain is CBS domain-containing protein CBSCBSPB3 (CBSCBSPB3) from Arabidopsis thaliana (Mouse-ear cress).